The primary structure comprises 79 residues: Translation initiation factor IF-1, chloroplastic (79 aa).

The region spanning 1–74 is the S1-like domain; sequence MTRKNIDLIE…HRGRITFRLR (74 aa).

The protein belongs to the IF-1 family. Component of the 30S ribosomal translation pre-initiation complex which assembles on the 30S ribosome in the order IF-2 and IF-3, IF-1 and N-formylmethionyl-tRNA(fMet); mRNA recruitment can occur at any time during PIC assembly.

Its subcellular location is the plastid. It is found in the chloroplast. One of the essential components for the initiation of protein synthesis. Stabilizes the binding of IF-2 and IF-3 on the 30S subunit to which N-formylmethionyl-tRNA(fMet) subsequently binds. Helps modulate mRNA selection, yielding the 30S pre-initiation complex (PIC). Upon addition of the 50S ribosomal subunit IF-1, IF-2 and IF-3 are released leaving the mature 70S translation initiation complex. The polypeptide is Translation initiation factor IF-1, chloroplastic (Chlorella vulgaris (Green alga)).